The primary structure comprises 100 residues: uncharacterized protein (100 aa).

Its subcellular location is the cytoplasm. The protein resides in the endoplasmic reticulum. This is an uncharacterized protein from Schizosaccharomyces pombe (strain 972 / ATCC 24843) (Fission yeast).